A 33-amino-acid polypeptide reads, in one-letter code: Protein YtiC (33 aa).

A helical transmembrane segment spans residues 10 to 29 (FDMLSIYIIYKLIVSNNTWL).

It localises to the cell inner membrane. This is Protein YtiC from Escherichia coli (strain K12).